The following is a 256-amino-acid chain: MAAAVGRLLRASVARHVSAIPWGISATAALRPAACGRTSLTNLLCSGSSQAKLFSTSSSCHAPAVTQHAPYFKGTAVVNGEFKDLSLDDFKGKYLVLFFYPLDFTFVCPTEIVAFSDKANEFHDVNCEVVAVSVDSHFSHLAWINTPRKNGGLGHMNIALLSDLTKQISRDYGVLLEGSGLALRGLFIIDPNGVIKHLSVNDLPVGRSVEETLRLVKAFQYVETHGEVCPANWTPDSPTIKPSPAASKEYFQKVNQ.

A mitochondrion-targeting transit peptide spans 1-61 (MAAAVGRLLR…KLFSTSSSCH (61 aa)). Positions 63 to 221 (PAVTQHAPYF…TLRLVKAFQY (159 aa)) constitute a Thioredoxin domain. K83 carries the post-translational modification N6-succinyllysine. The residue at position 91 (K91) is an N6-acetyllysine; alternate. The residue at position 91 (K91) is an N6-succinyllysine; alternate. Catalysis depends on C108, which acts as the Cysteine sulfenic acid (-SOH) intermediate. At T146 the chain carries Phosphothreonine.

Belongs to the peroxiredoxin family. AhpC/Prx1 subfamily. Homodimer; disulfide-linked, upon oxidation. 6 homodimers assemble to form a ring-like dodecamer. Interacts with NEK6. Interacts with LRRK2. Interacts with MAP3K13. Interacts with RPS6KC1 (via PX domain). Post-translationally, phosphorylated by LRRK2; phosphorylation reduces perodixase activity. In terms of processing, the enzyme can be inactivated by further oxidation of the cysteine sulfenic acid (C(P)-SOH) to sulphinic acid (C(P)-SO2H) and sulphonic acid (C(P)-SO3H) instead of its condensation to a disulfide bond. S-palmitoylated.

The protein resides in the mitochondrion. It localises to the cytoplasm. Its subcellular location is the early endosome. The catalysed reaction is a hydroperoxide + [thioredoxin]-dithiol = an alcohol + [thioredoxin]-disulfide + H2O. Its function is as follows. Thiol-specific peroxidase that catalyzes the reduction of hydrogen peroxide and organic hydroperoxides to water and alcohols, respectively. Plays a role in cell protection against oxidative stress by detoxifying peroxides. Acts synergistically with MAP3K13 to regulate the activation of NF-kappa-B in the cytosol. Required for the maintenance of physical strength. The polypeptide is Thioredoxin-dependent peroxide reductase, mitochondrial (PRDX3) (Homo sapiens (Human)).